The chain runs to 59 residues: U-actitoxin-Aer2b (59 aa).

In terms of processing, contains 5 disulfide bonds.

It is found in the secreted. The protein resides in the nematocyst. This is U-actitoxin-Aer2b from Anemonia erythraea (Sea anemone).